The chain runs to 711 residues: Serine/threonine-protein kinase ATG1b (711 aa).

In terms of domain architecture, Protein kinase spans 20 to 277 (YAVGRQIGSG…FEEFFHHPFL (258 aa)). Residues 26–34 (IGSGSFSVV) and K49 contribute to the ATP site. The Proton acceptor role is filled by D142. Disordered regions lie at residues 318–342 (LPFF…TSPM) and 383–419 (FEGH…SMDQ). Positions 383-393 (FEGHRLSDRSQ) are enriched in basic and acidic residues. Polar residues predominate over residues 394–410 (FKPSSLPDSRSFSTQGR). Positions 421-424 (YVLI) match the AIM (Atg8-family-interacting motif) motif.

Belongs to the protein kinase superfamily. Ser/Thr protein kinase family.

The protein localises to the cytoplasmic vesicle. It is found in the autophagosome. Its function is as follows. Serine/threonine protein kinase involved in autophagy. The ATG1-ATG13 protein kinase complex regulates downstream events required for autophagosome enclosure and/or vacuolar delivery. In Arabidopsis thaliana (Mouse-ear cress), this protein is Serine/threonine-protein kinase ATG1b.